Consider the following 153-residue polypeptide: NADPH-dependent 7-cyano-7-deazaguanine reductase (153 aa).

Residues 1–30 form a disordered region; that stretch reads MDSIETHAKQLGQQTPLPASPEAAQLDRVP. Cysteine 51 (thioimide intermediate) is an active-site residue. Residue aspartate 58 is the Proton donor of the active site. Residues 73-75 and 92-93 contribute to the substrate site; these read VES and HE.

This sequence belongs to the GTP cyclohydrolase I family. QueF type 1 subfamily.

It is found in the cytoplasm. The enzyme catalyses 7-aminomethyl-7-carbaguanine + 2 NADP(+) = 7-cyano-7-deazaguanine + 2 NADPH + 3 H(+). Its pathway is tRNA modification; tRNA-queuosine biosynthesis. In terms of biological role, catalyzes the NADPH-dependent reduction of 7-cyano-7-deazaguanine (preQ0) to 7-aminomethyl-7-deazaguanine (preQ1). The chain is NADPH-dependent 7-cyano-7-deazaguanine reductase from Methylorubrum extorquens (strain CM4 / NCIMB 13688) (Methylobacterium extorquens).